The chain runs to 215 residues: Rho-related GTP-binding protein RhoF (215 aa).

N-acetylmethionine is present on Met-1. GTP is bound at residue Gly-30–Thr-37. The Effector region signature appears at Tyr-52 to Tyr-60. GTP contacts are provided by residues Asp-77–Gln-81 and Cys-135–Asp-138. Residue Cys-212 is modified to Cysteine methyl ester. Cys-212 is lipidated: S-geranylgeranyl cysteine. Residues Leu-213–Leu-215 constitute a propeptide, removed in mature form.

It belongs to the small GTPase superfamily. Rho family.

Its subcellular location is the cell membrane. It is found in the cytoplasm. It localises to the cytoskeleton. Functionally, plasma membrane-associated small GTPase which cycles between an active GTP-bound and an inactive GDP-bound state. Causes the formation of thin, actin-rich surface projections called filopodia. Functions cooperatively with CDC42 and Rac to generate additional structures, increasing the diversity of actin-based morphology. The polypeptide is Rho-related GTP-binding protein RhoF (RHOF) (Bos taurus (Bovine)).